Consider the following 213-residue polypeptide: Uracil phosphoribosyltransferase (213 aa).

Residues Arg-78, Arg-103, and 130 to 138 contribute to the 5-phospho-alpha-D-ribose 1-diphosphate site; that span reads DPMLATGGS. Uracil is bound by residues Ile-197 and 202 to 204; that span reads GDA. Position 203 (Asp-203) interacts with 5-phospho-alpha-D-ribose 1-diphosphate.

This sequence belongs to the UPRTase family. Mg(2+) is required as a cofactor.

The catalysed reaction is UMP + diphosphate = 5-phospho-alpha-D-ribose 1-diphosphate + uracil. It functions in the pathway pyrimidine metabolism; UMP biosynthesis via salvage pathway; UMP from uracil: step 1/1. Its activity is regulated as follows. Allosterically activated by GTP. Catalyzes the conversion of uracil and 5-phospho-alpha-D-ribose 1-diphosphate (PRPP) to UMP and diphosphate. The protein is Uracil phosphoribosyltransferase of Cutibacterium acnes (strain DSM 16379 / KPA171202) (Propionibacterium acnes).